The chain runs to 403 residues: MMHKPYLKSFPNKEGYFGKYGGAYLPPLLIEHFKEIGEAYLKISQSFDFIQELKSIRKHYQGRPTPLYYARRLSQKAGGAAIYLKREDLNHTGAHKLNHCMAEALLAKHLGKKKLIAETGAGQHGVALATAAAYFGMECEIHMGEVDIAKEHPNVIRMKMLGAKVVPVSFGERTLKEAVDSAFEAYLKDPANAIYAIGSVVGPHPFPKMVRDFQSVVGAEAKEQFLEMTGELPDHIVACVGGGSNAMGIFSAFIDDPVELWGVEPLGKGKSLGEHAASLSYGKEGVMHGFNSIMLQNEDGSPASVHSVASGLDYPSVGPEHAYLHEIGRTHSVGVSDEEAIKNFFALSRLEGIIPAIESAHAIAYGMKLAKERLGEKILINLSGRGDKDIDYVSETFGFGGEE.

K96 carries the N6-(pyridoxal phosphate)lysine modification.

The protein belongs to the TrpB family. Tetramer of two alpha and two beta chains. It depends on pyridoxal 5'-phosphate as a cofactor.

It carries out the reaction (1S,2R)-1-C-(indol-3-yl)glycerol 3-phosphate + L-serine = D-glyceraldehyde 3-phosphate + L-tryptophan + H2O. Its pathway is amino-acid biosynthesis; L-tryptophan biosynthesis; L-tryptophan from chorismate: step 5/5. The beta subunit is responsible for the synthesis of L-tryptophan from indole and L-serine. This is Tryptophan synthase beta chain 1 (trpB1) from Wolinella succinogenes (strain ATCC 29543 / DSM 1740 / CCUG 13145 / JCM 31913 / LMG 7466 / NCTC 11488 / FDC 602W) (Vibrio succinogenes).